A 286-amino-acid chain; its full sequence is UPF0761 membrane protein KPN78578_41360 (286 aa).

7 helical membrane-spanning segments follow: residues 44-64 (LLSL…FPMF), 74-94 (FIFA…IEQF), 104-124 (VGAF…DSAL), 140-160 (FAVY…SLAI), 183-203 (LFPL…VPTT), 210-230 (AVIG…AFAL), and 244-264 (VISV…IVLL).

This sequence belongs to the UPF0761 family.

Its subcellular location is the cell inner membrane. The polypeptide is UPF0761 membrane protein KPN78578_41360 (Klebsiella pneumoniae subsp. pneumoniae (strain ATCC 700721 / MGH 78578)).